Consider the following 302-residue polypeptide: MNYLLGAFKPACNISITFTDGKNRKQVPTKKDNGQIVMNPLFQSQETIAGKINIEPYQGKKVEHNGVKVELLGQIEMYFDRGNFYDFTSLVREIDVPGEIYERKTYPFEFSSVEMPYETYNGVNVRLRYVLKVTVTRGYAGSIVEYQDFVVRNYVPLPPINNSIKMEVGIEDCLHIEFEYNKSKYHLKDVILGKIYFLLVRIKIKNMDLEIRRRESTGAGANTHVETETLAKFELMDGAPVRGESIPVRVFLTPYDLTPTHKNINNKFSVKYYLNLVLVDEEDRRYFKQQEITLYRLKEETS.

Belongs to the VPS26 family. As to quaternary structure, component of the retromer complex which consists of VPS29 (MAG1), VPS26 (VPS26A or VPS26B), VPS35 (VPS35A or VPS35B or VPS35C), VPS5/17 (SNX1 or SNX2A or SNX2B). Component of a retromer subcomplex consisting of VPS29 (MAG1), VPS26 (VPS26A or VPS26B), VPS35 (VPS35A or VPS35B or VPS35C).

It localises to the cytoplasm. The protein resides in the endosome membrane. The protein localises to the prevacuolar compartment membrane. It is found in the golgi apparatus. Its subcellular location is the trans-Golgi network membrane. Its function is as follows. Plays a role in vesicular protein sorting. Component of the membrane-associated retromer complex which is essential in endosome-to-Golgi retrograde transport. The VPS29-VPS26-VPS35 subcomplex may be involved in recycling of specific cargos from endosome to the plasma membrane. The sequence is that of Vacuolar protein sorting-associated protein 26A (VPS26A) from Arabidopsis thaliana (Mouse-ear cress).